The following is a 405-amino-acid chain: Deoxyguanosinetriphosphate triphosphohydrolase-like protein (405 aa).

Residues arginine 75–asparagine 219 enclose the HD domain.

The protein belongs to the dGTPase family. Type 2 subfamily.

The polypeptide is Deoxyguanosinetriphosphate triphosphohydrolase-like protein (Rhizobium johnstonii (strain DSM 114642 / LMG 32736 / 3841) (Rhizobium leguminosarum bv. viciae)).